Here is a 241-residue protein sequence, read N- to C-terminus: Small ribosomal subunit protein uS2 (241 aa).

The protein belongs to the universal ribosomal protein uS2 family.

The chain is Small ribosomal subunit protein uS2 from Glaesserella parasuis serovar 5 (strain SH0165) (Haemophilus parasuis).